The sequence spans 416 residues: UBX domain-containing protein 4 (416 aa).

In terms of domain architecture, UBX spans 273–350; the sequence is KAISECLLRV…EFGSKTMLLF (78 aa). The disordered stretch occupies residues 376–402; it reads TRTTPSVNTINKSNPQGPSDNATSIKK. The span at 378 to 402 shows a compositional bias: polar residues; sequence TTPSVNTINKSNPQGPSDNATSIKK.

Its subcellular location is the nucleus. It is found in the cytoplasm. Functionally, involved in CDC48-dependent protein degradation through the ubiquitin/proteasome pathway. The chain is UBX domain-containing protein 4 (UBX4) from Saccharomyces cerevisiae (strain ATCC 204508 / S288c) (Baker's yeast).